Here is a 371-residue protein sequence, read N- to C-terminus: tRNA-specific 2-thiouridylase MnmA (371 aa).

Residues 12 to 19 (GMSGGVDS) and M38 contribute to the ATP site. The segment at 98–100 (NPD) is interaction with target base in tRNA. The active-site Nucleophile is the C103. C103 and C200 are joined by a disulfide. G127 lines the ATP pocket. The tract at residues 150–152 (KDQ) is interaction with tRNA. The Cysteine persulfide intermediate role is filled by C200. The interval 308–309 (RY) is interaction with tRNA.

Belongs to the MnmA/TRMU family.

It localises to the cytoplasm. It catalyses the reaction S-sulfanyl-L-cysteinyl-[protein] + uridine(34) in tRNA + AH2 + ATP = 2-thiouridine(34) in tRNA + L-cysteinyl-[protein] + A + AMP + diphosphate + H(+). Functionally, catalyzes the 2-thiolation of uridine at the wobble position (U34) of tRNA, leading to the formation of s(2)U34. This is tRNA-specific 2-thiouridylase MnmA from Oceanobacillus iheyensis (strain DSM 14371 / CIP 107618 / JCM 11309 / KCTC 3954 / HTE831).